A 24-amino-acid polypeptide reads, in one-letter code: Brevinin-1Lb (24 aa).

Cys-18 and Cys-24 are oxidised to a cystine.

Expressed by the skin glands.

The protein localises to the secreted. Its function is as follows. Antibacterial activity against Gram-positive bacterium S.aureus and Gram-negative bacterium E.coli. The chain is Brevinin-1Lb from Rana luteiventris (Columbia spotted frog).